The primary structure comprises 130 residues: Small ribosomal subunit protein uS9 (130 aa).

The protein belongs to the universal ribosomal protein uS9 family.

The sequence is that of Small ribosomal subunit protein uS9 from Onion yellows phytoplasma (strain OY-M).